The chain runs to 492 residues: MPARAIMFQGTGSDVGKSLIVAGLARALTLRGLKVAPFKPQNMSNNAAVTADGGEIGRAQALQARAARRPMTVHMNPVLLKPQSEIGSQVVVQGRVIGNAKASAYQAMKPQLMKAVLDSFHHLIADTDIALVEGAGSASEINLRAGDIANMGFAQATQIPVVLIGDIDRGGVIASLVGTQAVLAPDDAALIAGFLVNKFRGDPALFASGMSEIATRTRWTSLGLIPHFADARRLPAEDALGLPGGGVWSRDRPKIAVLAYPRISNFDEFDPLRLEDGVDLQFLRPGTPIPGDAAVVILPGSKATIADLAALREAGWDIDLQAHLRRGGRVLGICGGYQMLGRMISDPDGHEGAPGAVAGLGLLDIETTLTGDKALRDVEGRLTQDEAPFRGYEMHIGRTDGPAAQHPFLVFSDGRRDGAVAAGGQIAGCYVHGLFADDHLRAHWLRGLGTTASGQSYDADVDATLDALAAHLERYIDIDRILDLARVPRAIT.

The region spanning 252–440 is the GATase cobBQ-type domain; that stretch reads RPKIAVLAYP…VHGLFADDHL (189 aa). Cysteine 334 (nucleophile) is an active-site residue. The active site involves histidine 432.

The protein belongs to the CobB/CobQ family. CobQ subfamily.

It functions in the pathway cofactor biosynthesis; adenosylcobalamin biosynthesis. Functionally, catalyzes amidations at positions B, D, E, and G on adenosylcobyrinic A,C-diamide. NH(2) groups are provided by glutamine, and one molecule of ATP is hydrogenolyzed for each amidation. The chain is Cobyric acid synthase from Bradyrhizobium sp. (strain BTAi1 / ATCC BAA-1182).